The following is a 209-amino-acid chain: Thymidylate kinase (209 aa).

An ATP-binding site is contributed by 10-17 (GIDGCGKS).

This sequence belongs to the thymidylate kinase family.

The enzyme catalyses dTMP + ATP = dTDP + ADP. In terms of biological role, phosphorylation of dTMP to form dTDP in both de novo and salvage pathways of dTTP synthesis. The protein is Thymidylate kinase of Parasynechococcus marenigrum (strain WH8102).